The following is a 173-amino-acid chain: Globin-like host-protective antigen (173 aa).

The first 15 residues, 1–15 (MRFLLLAAFVAYAYA), serve as a signal peptide directing secretion. The Globin domain maps to 25 to 166 (ALSALDVVPL…FNDEAQKQLA (142 aa)). His-114 provides a ligand contact to heme b.

It belongs to the globin family.

The protein localises to the secreted. It is found in the extracellular space. In terms of biological role, may be a globin and may play a role in oxygen transport. The polypeptide is Globin-like host-protective antigen (Trichostrongylus colubriformis (Black scour worm)).